The primary structure comprises 342 residues: Pyrophosphate--fructose 6-phosphate 1-phosphotransferase (342 aa).

G10 lines the diphosphate pocket. Mg(2+) is bound at residue E103. Residues 126–128 (TID), R163, 170–172 (MGR), E222, R266, and 272–275 (HVQR) contribute to the substrate site. D128 serves as the catalytic Proton acceptor.

It belongs to the phosphofructokinase type A (PFKA) family. Mixed-substrate PFK group III subfamily. As to quaternary structure, homodimer or homotetramer. Mg(2+) serves as cofactor.

Its subcellular location is the cytoplasm. It catalyses the reaction beta-D-fructose 6-phosphate + diphosphate = beta-D-fructose 1,6-bisphosphate + phosphate + H(+). Its pathway is carbohydrate degradation; glycolysis; D-glyceraldehyde 3-phosphate and glycerone phosphate from D-glucose: step 3/4. Its activity is regulated as follows. Non-allosteric. In terms of biological role, catalyzes the phosphorylation of D-fructose 6-phosphate, the first committing step of glycolysis. Uses inorganic phosphate (PPi) as phosphoryl donor instead of ATP like common ATP-dependent phosphofructokinases (ATP-PFKs), which renders the reaction reversible, and can thus function both in glycolysis and gluconeogenesis. Consistently, PPi-PFK can replace the enzymes of both the forward (ATP-PFK) and reverse (fructose-bisphosphatase (FBPase)) reactions. The sequence is that of Pyrophosphate--fructose 6-phosphate 1-phosphotransferase from Streptomyces coelicolor (strain ATCC BAA-471 / A3(2) / M145).